A 663-amino-acid chain; its full sequence is DNA ligase (663 aa).

NAD(+) is bound by residues 33–37, 82–83, and glutamate 113; these read DQEFD and SL. Catalysis depends on lysine 115, which acts as the N6-AMP-lysine intermediate. NAD(+) contacts are provided by arginine 136, glutamate 170, lysine 286, and lysine 310. Positions 404, 407, 422, and 427 each coordinate Zn(2+). One can recognise a BRCT domain in the interval 587-663; the sequence is SSDPSLTGKL…IEESDLEDFL (77 aa).

The protein belongs to the NAD-dependent DNA ligase family. LigA subfamily. Mg(2+) serves as cofactor. The cofactor is Mn(2+).

It catalyses the reaction NAD(+) + (deoxyribonucleotide)n-3'-hydroxyl + 5'-phospho-(deoxyribonucleotide)m = (deoxyribonucleotide)n+m + AMP + beta-nicotinamide D-nucleotide.. In terms of biological role, DNA ligase that catalyzes the formation of phosphodiester linkages between 5'-phosphoryl and 3'-hydroxyl groups in double-stranded DNA using NAD as a coenzyme and as the energy source for the reaction. It is essential for DNA replication and repair of damaged DNA. This Natranaerobius thermophilus (strain ATCC BAA-1301 / DSM 18059 / JW/NM-WN-LF) protein is DNA ligase.